Reading from the N-terminus, the 748-residue chain is Basic juvenile hormone-suppressible protein 1 (748 aa).

The signal sequence occupies residues 1–17 (MRVLVLVASLGLRGSVV).

The protein belongs to the hemocyanin family. In terms of tissue distribution, fat body, and hemolymph of larvae.

The polypeptide is Basic juvenile hormone-suppressible protein 1 (BJSP-1) (Trichoplusia ni (Cabbage looper)).